The chain runs to 482 residues: Butyrophilin-like protein 2 (482 aa).

The Cytoplasmic portion of the chain corresponds to 1 to 6 (MVDFPG). Residues 7–23 (YNLSGAVASFLFILLTM) traverse the membrane as a helical; Signal-anchor for type II membrane protein segment. Residues 24 to 482 (KQSEDFRVIG…VAVGLPRKRS (459 aa)) lie on the Extracellular side of the membrane. Ig-like V-type domains are found at residues 29 to 140 (FRVI…LLLK), 142 to 234 (AGLG…SVIS), and 236 to 355 (PEKL…ASLD). Intrachain disulfides connect Cys50-Cys124, Cys164-Cys218, and Cys267-Cys341. Residue Asn210 is glycosylated (N-linked (GlcNAc...) asparagine). Asn427 carries N-linked (GlcNAc...) asparagine glycosylation.

This sequence belongs to the immunoglobulin superfamily. BTN/MOG family. Expressed in brain, heart, kidney, liver, pancreas, ovary, leukocyte, small intestine, testis and thymus.

The protein localises to the membrane. Its function is as follows. Negative regulator of T-cell proliferation. The polypeptide is Butyrophilin-like protein 2 (Homo sapiens (Human)).